We begin with the raw amino-acid sequence, 391 residues long: GTPase Obg (391 aa).

The region spanning 1–159 (MKFIDEALIR…RDLLLELMLL (159 aa)) is the Obg domain. The OBG-type G domain occupies 160–333 (ADVGMLGLPN…LTRDIMDFIE (174 aa)). GTP is bound by residues 166-173 (GLPNAGKS), 191-195 (FTTLV), 213-216 (DIPG), 283-286 (NKID), and 314-316 (SAA). The Mg(2+) site is built by Ser-173 and Thr-193.

It belongs to the TRAFAC class OBG-HflX-like GTPase superfamily. OBG GTPase family. In terms of assembly, monomer. The cofactor is Mg(2+).

It localises to the cytoplasm. Its function is as follows. An essential GTPase which binds GTP, GDP and possibly (p)ppGpp with moderate affinity, with high nucleotide exchange rates and a fairly low GTP hydrolysis rate. Plays a role in control of the cell cycle, stress response, ribosome biogenesis and in those bacteria that undergo differentiation, in morphogenesis control. The polypeptide is GTPase Obg (Actinobacillus pleuropneumoniae serotype 7 (strain AP76)).